A 284-amino-acid polypeptide reads, in one-letter code: Phosphonates import ATP-binding protein PhnC 2 (284 aa).

The ABC transporter domain maps to 24–264; sequence IRIDGISVRR…LEARIFPSLA (241 aa). An ATP-binding site is contributed by 56 to 63; that stretch reads GPSGVGKT.

This sequence belongs to the ABC transporter superfamily. Phosphonates importer (TC 3.A.1.9.1) family. In terms of assembly, the complex is composed of two ATP-binding proteins (PhnC), two transmembrane proteins (PhnE) and a solute-binding protein (PhnD).

It is found in the cell inner membrane. The catalysed reaction is phosphonate(out) + ATP + H2O = phosphonate(in) + ADP + phosphate + H(+). In terms of biological role, part of the ABC transporter complex PhnCDE involved in phosphonates import. Responsible for energy coupling to the transport system. In Rhodopseudomonas palustris (strain ATCC BAA-98 / CGA009), this protein is Phosphonates import ATP-binding protein PhnC 2.